Reading from the N-terminus, the 232-residue chain is Phosphoribosylformylglycinamidine synthase subunit PurQ (232 aa).

In terms of domain architecture, Glutamine amidotransferase type-1 spans 2–232; sequence RIGVITFPGS…SVVRSTLVEA (231 aa). Cys85 (nucleophile) is an active-site residue. Catalysis depends on residues His194 and Glu196.

In terms of assembly, part of the FGAM synthase complex composed of 1 PurL, 1 PurQ and 2 PurS subunits.

It localises to the cytoplasm. It catalyses the reaction N(2)-formyl-N(1)-(5-phospho-beta-D-ribosyl)glycinamide + L-glutamine + ATP + H2O = 2-formamido-N(1)-(5-O-phospho-beta-D-ribosyl)acetamidine + L-glutamate + ADP + phosphate + H(+). The enzyme catalyses L-glutamine + H2O = L-glutamate + NH4(+). The protein operates within purine metabolism; IMP biosynthesis via de novo pathway; 5-amino-1-(5-phospho-D-ribosyl)imidazole from N(2)-formyl-N(1)-(5-phospho-D-ribosyl)glycinamide: step 1/2. Functionally, part of the phosphoribosylformylglycinamidine synthase complex involved in the purines biosynthetic pathway. Catalyzes the ATP-dependent conversion of formylglycinamide ribonucleotide (FGAR) and glutamine to yield formylglycinamidine ribonucleotide (FGAM) and glutamate. The FGAM synthase complex is composed of three subunits. PurQ produces an ammonia molecule by converting glutamine to glutamate. PurL transfers the ammonia molecule to FGAR to form FGAM in an ATP-dependent manner. PurS interacts with PurQ and PurL and is thought to assist in the transfer of the ammonia molecule from PurQ to PurL. In Leifsonia xyli subsp. xyli (strain CTCB07), this protein is Phosphoribosylformylglycinamidine synthase subunit PurQ.